An 847-amino-acid polypeptide reads, in one-letter code: Signal transducer and activator of transcription 6 (847 aa).

Position 2 is an N-acetylserine (S2). In terms of domain architecture, SH2 spans 517–632 (WFDGVLDLTK…EAFRSHYKPE (116 aa)). Residue Y641 is modified to Phosphotyrosine; by JAK. The LXXLL motif signature appears at 802 to 806 (LTKLL). Residues 809-847 (GQGESGGGSLGAQPLLQPSHYGQSGISMSHMDLRANPSW) are disordered.

The protein belongs to the transcription factor STAT family. Forms a homodimer or a heterodimer with a related family member. Interacts with NCOA1 via its C-terminal LXXLL motif. Post-translationally, tyrosine phosphorylated on Tyr-641 following stimulation by IL4/interleukin-4. Tyrosine phosphorylated following stimulation by IL3/interleukin-3. Dephosphorylation on tyrosine residues by PTPN2 negatively regulates the IL4/interleukin-4 mediated signaling. In terms of processing, mono-ADP-ribosylated by PARP14.

It is found in the cytoplasm. The protein localises to the nucleus. Its function is as follows. Carries out a dual function: signal transduction and activation of transcription. Involved in IL4/interleukin-4- and IL3/interleukin-3-mediated signaling. This Homo sapiens (Human) protein is Signal transducer and activator of transcription 6 (STAT6).